The following is a 423-amino-acid chain: Serine hydroxymethyltransferase (423 aa).

Residue 121 to 123 (GHI) coordinates (6S)-5,6,7,8-tetrahydrofolate. Lys227 carries the N6-(pyridoxal phosphate)lysine modification. Glu242 contributes to the (6S)-5,6,7,8-tetrahydrofolate binding site.

Belongs to the SHMT family. As to quaternary structure, homodimer. Pyridoxal 5'-phosphate is required as a cofactor.

It localises to the cytoplasm. It catalyses the reaction 5,10-methylenetetrahydromethanopterin + glycine + H2O = 5,6,7,8-tetrahydromethanopterin + L-serine. It participates in amino-acid biosynthesis; glycine biosynthesis; glycine from L-serine: step 1/1. Catalyzes the reversible interconversion of serine and glycine with tetrahydromethanopterin (H4MPT) serving as the one-carbon carrier. Cannot use tetrahydrofolate (THF or H4PteGlu) instead of H4MPT as the pteridine substrate. Also probably exhibits a pteridine-independent aldolase activity toward beta-hydroxyamino acids, producing glycine and aldehydes, via a retro-aldol mechanism. This Methanothermobacter thermautotrophicus (strain ATCC 29096 / DSM 1053 / JCM 10044 / NBRC 100330 / Delta H) (Methanobacterium thermoautotrophicum) protein is Serine hydroxymethyltransferase.